Reading from the N-terminus, the 185-residue chain is uncharacterized protein (185 aa).

The 161-residue stretch at 9–169 (VILELAKESD…NGREDDKPLL (161 aa)) folds into the N-acetyltransferase domain.

This is an uncharacterized protein from Bacillus subtilis (strain 168).